A 237-amino-acid chain; its full sequence is MRPSKRAADAMRDVTLERAVARYAEGSCLVTFGNTRVLCTASLEERGPPWLRGSGKGWVTAEYAMLPRATHERTRREVNSGKPSGRTQEIQRLIGRSLRAVTNLPALGERQITVDCDVIQADGGTRTASITGAWVALHDCFAWMRARSIISVDPLKDHVAAVSCGIYKGQPVLDLDYAEDSAAETDANFVVTGKGGIVEVQGTAEMEPFSEAQFIELLALAKGGIANLVELQRKAIA.

Phosphate-binding positions include Arg-86 and Gly-124 to Arg-126.

The protein belongs to the RNase PH family. Homohexameric ring arranged as a trimer of dimers.

The catalysed reaction is tRNA(n+1) + phosphate = tRNA(n) + a ribonucleoside 5'-diphosphate. Its function is as follows. Phosphorolytic 3'-5' exoribonuclease that plays an important role in tRNA 3'-end maturation. Removes nucleotide residues following the 3'-CCA terminus of tRNAs; can also add nucleotides to the ends of RNA molecules by using nucleoside diphosphates as substrates, but this may not be physiologically important. Probably plays a role in initiation of 16S rRNA degradation (leading to ribosome degradation) during starvation. This chain is Ribonuclease PH, found in Methylorubrum populi (strain ATCC BAA-705 / NCIMB 13946 / BJ001) (Methylobacterium populi).